We begin with the raw amino-acid sequence, 272 residues long: Ethanolamine ammonia-lyase small subunit (272 aa).

Adenosylcob(III)alamin contacts are provided by valine 161, glutamate 182, and cysteine 211.

It belongs to the EutC family. The basic unit is a heterodimer which dimerizes to form tetramers. The heterotetramers trimerize; 6 large subunits form a core ring with 6 small subunits projecting outwards. Adenosylcob(III)alamin is required as a cofactor.

It localises to the bacterial microcompartment. It carries out the reaction ethanolamine = acetaldehyde + NH4(+). It functions in the pathway amine and polyamine degradation; ethanolamine degradation. Functionally, catalyzes the deamination of various vicinal amino-alcohols to oxo compounds. Allows this organism to utilize ethanolamine as the sole source of nitrogen and carbon in the presence of external vitamin B12. The chain is Ethanolamine ammonia-lyase small subunit from Pseudomonas putida (strain ATCC 47054 / DSM 6125 / CFBP 8728 / NCIMB 11950 / KT2440).